Here is a 320-residue protein sequence, read N- to C-terminus: MSTPMIFAIPSKGRLKDQVEAWLADCGFKLEMTGGARGYSAELSGLPGVSVRLLSAGDIAAGLDSGDLHLGVTGEDLLRERGDDMDSRVMLLRALGFGRADLVVTAPKNWLDVDTMADVDEVGHAHLARTGRRLRVATKYVTQTRAFFARHGVADYRIVESSGATEGAPAAGAAELVVDITTTGATLAANGLKILSDGVILKSQAQLTASLTAGWNGEQLDALRRLLSVVEAKGRAGKLATLVWPAEQDRAAQDAVAAFIARGGSRRANGALLATADLFDAAAALAEAGVEPVTVSRPDYVFESRSAVLDRFAEALKSKI.

This sequence belongs to the ATP phosphoribosyltransferase family. Long subfamily. It depends on Mg(2+) as a cofactor.

The protein resides in the cytoplasm. The enzyme catalyses 1-(5-phospho-beta-D-ribosyl)-ATP + diphosphate = 5-phospho-alpha-D-ribose 1-diphosphate + ATP. The protein operates within amino-acid biosynthesis; L-histidine biosynthesis; L-histidine from 5-phospho-alpha-D-ribose 1-diphosphate: step 1/9. Feedback inhibited by histidine. In terms of biological role, catalyzes the condensation of ATP and 5-phosphoribose 1-diphosphate to form N'-(5'-phosphoribosyl)-ATP (PR-ATP). Has a crucial role in the pathway because the rate of histidine biosynthesis seems to be controlled primarily by regulation of HisG enzymatic activity. This Caulobacter vibrioides (strain ATCC 19089 / CIP 103742 / CB 15) (Caulobacter crescentus) protein is ATP phosphoribosyltransferase (hisG).